Consider the following 203-residue polypeptide: Probable cytochrome c oxidase subunit 3 (203 aa).

The next 5 membrane-spanning stretches (helical) occupy residues 30–50, 70–90, 102–122, 142–162, and 179–199; these read IVWLSSELMFFAGLFAMYFTA, AVPVTLVLIASSFTCQMGVFA, WYVITFLMGLFFVLGQGYEYY, LATGFHDLHVTGGLVAFIFLL, and IVVSYYWHFVDIVWIALFTVI.

This sequence belongs to the cytochrome c oxidase subunit 3 family.

Its subcellular location is the cell membrane. It catalyses the reaction 4 Fe(II)-[cytochrome c] + O2 + 8 H(+)(in) = 4 Fe(III)-[cytochrome c] + 2 H2O + 4 H(+)(out). This is Probable cytochrome c oxidase subunit 3 (ctaE) from Mycolicibacterium paratuberculosis (strain ATCC BAA-968 / K-10) (Mycobacterium paratuberculosis).